Here is a 182-residue protein sequence, read N- to C-terminus: Adenine phosphoribosyltransferase (182 aa).

It belongs to the purine/pyrimidine phosphoribosyltransferase family. Homodimer.

It is found in the cytoplasm. The catalysed reaction is AMP + diphosphate = 5-phospho-alpha-D-ribose 1-diphosphate + adenine. It functions in the pathway purine metabolism; AMP biosynthesis via salvage pathway; AMP from adenine: step 1/1. Functionally, catalyzes a salvage reaction resulting in the formation of AMP, that is energically less costly than de novo synthesis. This is Adenine phosphoribosyltransferase from Campylobacter concisus (strain 13826).